The primary structure comprises 464 residues: Cell division protein FtsA (464 aa).

Residues 392 to 464 (EVIESDKDSE…FKKLMKSLFE (73 aa)) form a disordered region. Basic and acidic residues predominate over residues 416–455 (KKENDEVAPEAPREESYEDRENHLEDEQQTEGKAKEESKF).

The protein belongs to the FtsA/MreB family. Self-interacts. Interacts with FtsZ.

It localises to the cell membrane. Its function is as follows. Cell division protein that is involved in the assembly of the Z ring. May serve as a membrane anchor for the Z ring. The protein is Cell division protein FtsA of Staphylococcus epidermidis (strain ATCC 35984 / DSM 28319 / BCRC 17069 / CCUG 31568 / BM 3577 / RP62A).